The following is a 149-amino-acid chain: MDNDKKDKIILSGELTNHRFNFTKDGENGYSAYEVDRFLDQLVHTLTHYEAQRNREEEMKTAYEKLFQDRDEILKRCSKLEAELNNFYENGYSNRVLISRVQALENKIESLPSGQNDRLERIEKLLKRVIKHWTDGEDLSYGDFDDDFF.

This is an uncharacterized protein from Mycoplasma pneumoniae (strain ATCC 29342 / M129 / Subtype 1) (Mycoplasmoides pneumoniae).